The sequence spans 138 residues: Basic phospholipase A2 Bs-N6 (138 aa).

Positions 1–16 are cleaved as a signal peptide; that stretch reads MRTLWIVAVLLVGVEG. 7 disulfides stabilise this stretch: C42/C131, C44/C60, C59/C111, C65/C138, C66/C104, C73/C97, and C91/C102. Residues Y43, G45, and G47 each coordinate Ca(2+). The active site involves H63. Residue D64 coordinates Ca(2+). D105 is an active-site residue.

In terms of assembly, monomer. Requires Ca(2+) as cofactor. In terms of processing, contains 7 disulfide bonds. In terms of tissue distribution, expressed by the venom gland.

Its subcellular location is the secreted. The catalysed reaction is a 1,2-diacyl-sn-glycero-3-phosphocholine + H2O = a 1-acyl-sn-glycero-3-phosphocholine + a fatty acid + H(+). Its function is as follows. Snake venom phospholipase A2 (PLA2) that shows myotoxic activities. PLA2 catalyzes the calcium-dependent hydrolysis of the 2-acyl groups in 3-sn-phosphoglycerides. The polypeptide is Basic phospholipase A2 Bs-N6 (Bothriechis schlegelii (Eyelash palm pitviper)).